The sequence spans 221 residues: Stromal cell-derived factor 2-like protein 1 (221 aa).

A signal peptide spans 1 to 28 (MWSAGRGGAAWPVLLGLLLALLVPGGGA). 3 MIR domains span residues 33-87 (AELV…IRGG), 95-150 (GSPV…VRCS), and 151-205 (GQHW…AMEG). Residue S215 is modified to Phosphoserine. The Prevents secretion from ER signature appears at 218 to 221 (HDEL).

As to quaternary structure, part of a large chaperone multiprotein complex comprising CABP1, DNAJB11, HSP90B1, HSPA5, HYOU, PDIA2, PDIA4, PPIB, SDF2L1, UGGT1 and very small amounts of ERP29, but not, or at very low levels, CALR nor CANX. Ubiquitously expressed with high expression in testis, moderate expression in the pancreas, spleen, prostate, small intestine and colon. Very low expression is seen in brain and skeletal muscle.

It localises to the endoplasmic reticulum lumen. The polypeptide is Stromal cell-derived factor 2-like protein 1 (SDF2L1) (Homo sapiens (Human)).